A 146-amino-acid chain; its full sequence is Hemoglobin A/D subunit beta (146 aa).

The region spanning 2–146 is the Globin domain; the sequence is HWTSEEKQYI…VAHALALGYH (145 aa). Heme b contacts are provided by His63 and His92.

It belongs to the globin family. Hemoglobins A and D are heterotetramers of alpha-1, alpha-2 and two identical beta chains. In terms of tissue distribution, red blood cells.

Its function is as follows. Involved in oxygen transport from the lung to the various peripheral tissues. The sequence is that of Hemoglobin A/D subunit beta from Aldabrachelys gigantea (Aldabra giant tortoise).